Reading from the N-terminus, the 670-residue chain is MESIIQQINQLRTSLRHHEHQYHVLDAPEIPDAEYDRMMQQLRDLEAQHPELVTNDSPTQRVGAAPLDAFEQVKHEVPMLSLDNVFDEESYLAFDKRVHDRLKTAEPLTFCCELKLDGLAVSLLYENGELVRAATRGDGTTGENITANVRTIRAIPLRLHGDNVPRRVEVRGEVFMPQAGFEQLNEEARRKGGKVFANPRNAAAGSLRQLDPRITAKRPLTFFCYGVGLLDGGELPRSHIQCLMQFKAWGLPVSERVKLCTGSDQVIAFYRQIEQDRAGLGFDIDGVVIKVDDLALQEQLGFVARAPRWATAFKFPAQEQITQVREVEFQVGRTGAITPVARLEPVQVAGVIVSNATLHNADEIERLGLRIGDTVIVRRAGDVIPQVVGVVMEQRPDDTKEITFPSQCPVCGSDIERVEGEAVARCTGGLFCAAQRKEALKHFVSRRALDVDGMGDKIIEQLVEKQYVENPADLFQLTAGKLTGLDRMGPKSAQNLIAALEKAKQTTFARFLYALGIREVGEATAANLAAHFRTLDNLRAADIETLKSVPDVGEVVAKHVMNFLSEEHNQKVIEELEKVVSWPEPQQIVVEESDSPFAGKTVVLTGSLTILSRDEAKDRLTALGAKVSGSVSKKTHLVIAGEAAGSKLAKAQELGIKVIDEAEMIRLLGE.

NAD(+) contacts are provided by residues 32–36 (DAEYD), 81–82 (SL), and Glu-113. The active-site N6-AMP-lysine intermediate is the Lys-115. Residues Arg-136, Glu-173, Lys-290, and Lys-314 each contribute to the NAD(+) site. The Zn(2+) site is built by Cys-408, Cys-411, Cys-426, and Cys-432. Positions 592–670 (ESDSPFAGKT…EAEMIRLLGE (79 aa)) constitute a BRCT domain.

It belongs to the NAD-dependent DNA ligase family. LigA subfamily. Mg(2+) serves as cofactor. It depends on Mn(2+) as a cofactor.

The catalysed reaction is NAD(+) + (deoxyribonucleotide)n-3'-hydroxyl + 5'-phospho-(deoxyribonucleotide)m = (deoxyribonucleotide)n+m + AMP + beta-nicotinamide D-nucleotide.. Functionally, DNA ligase that catalyzes the formation of phosphodiester linkages between 5'-phosphoryl and 3'-hydroxyl groups in double-stranded DNA using NAD as a coenzyme and as the energy source for the reaction. It is essential for DNA replication and repair of damaged DNA. In Yersinia pestis bv. Antiqua (strain Antiqua), this protein is DNA ligase.